Here is an 854-residue protein sequence, read N- to C-terminus: DNA mismatch repair protein MutS (854 aa).

614 to 621 (GPNMGGKS) lines the ATP pocket.

The protein belongs to the DNA mismatch repair MutS family.

This protein is involved in the repair of mismatches in DNA. It is possible that it carries out the mismatch recognition step. This protein has a weak ATPase activity. The sequence is that of DNA mismatch repair protein MutS from Sodalis glossinidius (strain morsitans).